We begin with the raw amino-acid sequence, 140 residues long: Anti-sigma F factor (140 aa).

It belongs to the anti-sigma-factor family.

The enzyme catalyses L-seryl-[protein] + ATP = O-phospho-L-seryl-[protein] + ADP + H(+). The catalysed reaction is L-threonyl-[protein] + ATP = O-phospho-L-threonyl-[protein] + ADP + H(+). Binds to sigma F and blocks its ability to form an RNA polymerase holoenzyme (E-sigma F). Phosphorylates SpoIIAA on a serine residue. This phosphorylation may enable SpoIIAA to act as an anti-anti-sigma factor that counteracts SpoIIAB and thus releases sigma F from inhibition. In Clostridium perfringens (strain SM101 / Type A), this protein is Anti-sigma F factor.